The sequence spans 552 residues: FERRY endosomal RAB5 effector complex subunit 3 (552 aa).

The tract at residues 383 to 403 (LKESLDSGNQNGGNDDKTKNA) is disordered.

In terms of assembly, component of the FERRY complex composed of five subunits, TBCK, PPP1R21, FERRY3, CRYZL1 and GATD1 with a ratio of 1:2:1:2:4, respectively.

The protein localises to the cytoplasm. It localises to the early endosome. Its function is as follows. Component of the FERRY complex (Five-subunit Endosomal Rab5 and RNA/ribosome intermediary). The FERRY complex directly interacts with mRNAs and RAB5A, and functions as a RAB5A effector involved in the localization and the distribution of specific mRNAs most likely by mediating their endosomal transport. The complex recruits mRNAs and ribosomes to early endosomes through direct mRNA-interaction. Plays a role in mast cell degranulation. The chain is FERRY endosomal RAB5 effector complex subunit 3 from Pongo abelii (Sumatran orangutan).